Here is a 492-residue protein sequence, read N- to C-terminus: Probable malate:quinone oxidoreductase 1 (492 aa).

Belongs to the MQO family. FAD is required as a cofactor.

It carries out the reaction (S)-malate + a quinone = a quinol + oxaloacetate. It participates in carbohydrate metabolism; tricarboxylic acid cycle; oxaloacetate from (S)-malate (quinone route): step 1/1. This Staphylococcus aureus (strain MRSA252) protein is Probable malate:quinone oxidoreductase 1.